A 78-amino-acid polypeptide reads, in one-letter code: Acyl carrier protein (78 aa).

Positions 2–77 (STIEESVKSI…AAIDFIKESK (76 aa)) constitute a Carrier domain. Position 37 is an O-(pantetheine 4'-phosphoryl)serine (Ser-37).

It belongs to the acyl carrier protein (ACP) family. Post-translationally, 4'-phosphopantetheine is transferred from CoA to a specific serine of apo-ACP by AcpS. This modification is essential for activity because fatty acids are bound in thioester linkage to the sulfhydryl of the prosthetic group.

The protein localises to the cytoplasm. It participates in lipid metabolism; fatty acid biosynthesis. Functionally, carrier of the growing fatty acid chain in fatty acid biosynthesis. The chain is Acyl carrier protein from Wigglesworthia glossinidia brevipalpis.